The primary structure comprises 243 residues: 1-(5-phosphoribosyl)-5-[(5-phosphoribosylamino)methylideneamino] imidazole-4-carboxamide isomerase (243 aa).

D8 functions as the Proton acceptor in the catalytic mechanism. The active-site Proton donor is the D130.

Belongs to the HisA/HisF family.

It localises to the cytoplasm. The enzyme catalyses 1-(5-phospho-beta-D-ribosyl)-5-[(5-phospho-beta-D-ribosylamino)methylideneamino]imidazole-4-carboxamide = 5-[(5-phospho-1-deoxy-D-ribulos-1-ylimino)methylamino]-1-(5-phospho-beta-D-ribosyl)imidazole-4-carboxamide. Its pathway is amino-acid biosynthesis; L-histidine biosynthesis; L-histidine from 5-phospho-alpha-D-ribose 1-diphosphate: step 4/9. The protein is 1-(5-phosphoribosyl)-5-[(5-phosphoribosylamino)methylideneamino] imidazole-4-carboxamide isomerase of Acinetobacter baumannii (strain AB307-0294).